A 249-amino-acid chain; its full sequence is Phosphomannomutase (249 aa).

The Nucleophile role is filled by D15. Mg(2+) contacts are provided by D15 and D17. D17 functions as the Proton donor/acceptor in the catalytic mechanism. Alpha-D-mannose 1-phosphate is bound by residues R24, R126, R137, R144, S182, and D184. Mg(2+) is bound by residues D210, F222, and T227.

This sequence belongs to the eukaryotic PMM family. In terms of assembly, homodimer. Mg(2+) is required as a cofactor. As to expression, expressed in roots, leaves, flag leaves and immature spikes.

The protein localises to the cytoplasm. It carries out the reaction alpha-D-mannose 1-phosphate = D-mannose 6-phosphate. It participates in nucleotide-sugar biosynthesis; GDP-alpha-D-mannose biosynthesis; alpha-D-mannose 1-phosphate from D-fructose 6-phosphate: step 2/2. Its function is as follows. Catalyzes the interconversion of mannose-6-phosphate to mannose-1-phosphate, the precursor for the synthesis of GDP-mannose. GDP-mannose is an essential sugar nucleotide for the synthesis of D-mannose-containing cell wall polysaccharides (galactomannans and glucomannans), glycolipids, glycoproteins and the antioxidant L-ascorbate. Can complement the yeast temperature-sensitive mutant sec53-6. The polypeptide is Phosphomannomutase (Triticum aestivum (Wheat)).